Here is a 139-residue protein sequence, read N- to C-terminus: Tol-Pal system protein TolR (139 aa).

The helical transmembrane segment at 15–35 (IVPFLDVLLVLVLIFMATAPI) threads the bilayer.

It belongs to the ExbD/TolR family. As to quaternary structure, the Tol-Pal system is composed of five core proteins: the inner membrane proteins TolA, TolQ and TolR, the periplasmic protein TolB and the outer membrane protein Pal. They form a network linking the inner and outer membranes and the peptidoglycan layer.

The protein localises to the cell inner membrane. Functionally, part of the Tol-Pal system, which plays a role in outer membrane invagination during cell division and is important for maintaining outer membrane integrity. This Haemophilus influenzae (strain ATCC 51907 / DSM 11121 / KW20 / Rd) protein is Tol-Pal system protein TolR.